A 468-amino-acid polypeptide reads, in one-letter code: Trehalose-binding lipoprotein LpqY (468 aa).

Residues 1–25 (MVMSRGRIPRLGAAVLVALTTAAAA) form the signal peptide. The N-palmitoyl cysteine moiety is linked to residue Cys-26. Cys-26 is lipidated: S-diacylglycerol cysteine. A disulfide bond links Cys-54 and Cys-372. The alpha,alpha-trehalose site is built by Asp-97, Asn-151, Trp-276, Phe-278, Gly-351, and Arg-421.

The protein belongs to the bacterial solute-binding protein 1 family. As to quaternary structure, monomer. The complex is composed of two ATP-binding proteins (SugC), two transmembrane proteins (SugA and SugB) and a solute-binding protein (LpqY).

It is found in the cell inner membrane. Part of the ABC transporter complex LpqY-SugA-SugB-SugC, which is highly specific for uptake of trehalose. Involved in the recycling of extracellular trehalose released from trehalose-containing molecules synthesized by M.tuberculosis. Trehalose uptake is essential for virulence. In Mycobacterium tuberculosis (strain CDC 1551 / Oshkosh), this protein is Trehalose-binding lipoprotein LpqY (lpqY).